Here is a 297-residue protein sequence, read N- to C-terminus: 4-hydroxy-tetrahydrodipicolinate synthase (297 aa).

A pyruvate-binding site is contributed by threonine 49. Tyrosine 137 functions as the Proton donor/acceptor in the catalytic mechanism. Lysine 166 acts as the Schiff-base intermediate with substrate in catalysis. Residue isoleucine 208 coordinates pyruvate.

Belongs to the DapA family. As to quaternary structure, homotetramer; dimer of dimers.

It is found in the cytoplasm. The catalysed reaction is L-aspartate 4-semialdehyde + pyruvate = (2S,4S)-4-hydroxy-2,3,4,5-tetrahydrodipicolinate + H2O + H(+). Its pathway is amino-acid biosynthesis; L-lysine biosynthesis via DAP pathway; (S)-tetrahydrodipicolinate from L-aspartate: step 3/4. Functionally, catalyzes the condensation of (S)-aspartate-beta-semialdehyde [(S)-ASA] and pyruvate to 4-hydroxy-tetrahydrodipicolinate (HTPA). The protein is 4-hydroxy-tetrahydrodipicolinate synthase of Prosthecochloris aestuarii (strain DSM 271 / SK 413).